Reading from the N-terminus, the 165-residue chain is Thiol peroxidase (165 aa).

Residues 18–165 (PQVGDVVTDF…PNYDAALAVL (148 aa)) enclose the Thioredoxin domain. Cys60 serves as the catalytic Cysteine sulfenic acid (-SOH) intermediate. Cys60 and Cys94 are disulfide-bonded.

This sequence belongs to the peroxiredoxin family. Tpx subfamily. In terms of assembly, homodimer.

It catalyses the reaction a hydroperoxide + [thioredoxin]-dithiol = an alcohol + [thioredoxin]-disulfide + H2O. In terms of biological role, thiol-specific peroxidase that catalyzes the reduction of hydrogen peroxide and organic hydroperoxides to water and alcohols, respectively. Plays a role in cell protection against oxidative stress by detoxifying peroxides. The chain is Thiol peroxidase from Pasteurella multocida (strain Pm70).